The sequence spans 300 residues: Ribosomal RNA small subunit methyltransferase H (300 aa).

S-adenosyl-L-methionine-binding positions include 46–48 (GGH), D65, F92, D107, and Q114.

This sequence belongs to the methyltransferase superfamily. RsmH family.

Its subcellular location is the cytoplasm. It carries out the reaction cytidine(1402) in 16S rRNA + S-adenosyl-L-methionine = N(4)-methylcytidine(1402) in 16S rRNA + S-adenosyl-L-homocysteine + H(+). Functionally, specifically methylates the N4 position of cytidine in position 1402 (C1402) of 16S rRNA. This Prochlorococcus marinus (strain MIT 9312) protein is Ribosomal RNA small subunit methyltransferase H.